The chain runs to 431 residues: Glutamate-1-semialdehyde 2,1-aminomutase (431 aa).

N6-(pyridoxal phosphate)lysine is present on Lys269.

Belongs to the class-III pyridoxal-phosphate-dependent aminotransferase family. HemL subfamily. In terms of assembly, homodimer. The cofactor is pyridoxal 5'-phosphate.

The protein localises to the cytoplasm. It carries out the reaction (S)-4-amino-5-oxopentanoate = 5-aminolevulinate. It participates in porphyrin-containing compound metabolism; protoporphyrin-IX biosynthesis; 5-aminolevulinate from L-glutamyl-tRNA(Glu): step 2/2. Its pathway is porphyrin-containing compound metabolism; chlorophyll biosynthesis. This Chlorobium phaeobacteroides (strain BS1) protein is Glutamate-1-semialdehyde 2,1-aminomutase.